A 596-amino-acid chain; its full sequence is Phosphoenolpyruvate carboxykinase [GTP] (596 aa).

Substrate is bound by residues arginine 77 and 205-207; that span reads YGG. Residues lysine 214 and histidine 234 each contribute to the Mn(2+) site. Serine 256 serves as a coordination point for substrate. 257–262 serves as a coordination point for GTP; it reads ACGKTN. Cysteine 258 is a catalytic residue. A Mn(2+)-binding site is contributed by aspartate 283. A disordered region spans residues 362-388; the sequence is KKGSTEKAAHPNSRFTAPAKNNPAISP. A substrate-binding site is contributed by 373–375; that stretch reads NSR. GTP-binding positions include arginine 375, arginine 406, and 499–502; that span reads YGDN.

Belongs to the phosphoenolpyruvate carboxykinase [GTP] family. Monomer. Mn(2+) serves as cofactor.

Its subcellular location is the cytoplasm. The catalysed reaction is oxaloacetate + GTP = phosphoenolpyruvate + GDP + CO2. It participates in carbohydrate biosynthesis; gluconeogenesis. In terms of biological role, catalyzes the conversion of oxaloacetate (OAA) to phosphoenolpyruvate (PEP), the rate-limiting step in the metabolic pathway that produces glucose from lactate and other precursors derived from the citric acid cycle. The polypeptide is Phosphoenolpyruvate carboxykinase [GTP] (Anaeromyxobacter sp. (strain K)).